We begin with the raw amino-acid sequence, 182 residues long: Isopentenyl-diphosphate Delta-isomerase (182 aa).

The Mn(2+) site is built by His-25 and His-32. A Nudix hydrolase domain is found at 30 to 164 (LLHLAFSSWL…PWAFSPWMVM (135 aa)). The active site involves Cys-67. Mn(2+) is bound at residue His-69. Glu-87 is a Mg(2+) binding site. 2 residues coordinate Mn(2+): Glu-114 and Glu-116. Glu-116 is an active-site residue.

It belongs to the IPP isomerase type 1 family. As to quaternary structure, homodimer. It depends on Mg(2+) as a cofactor. Mn(2+) is required as a cofactor.

The protein resides in the cytoplasm. The catalysed reaction is isopentenyl diphosphate = dimethylallyl diphosphate. Its pathway is isoprenoid biosynthesis; dimethylallyl diphosphate biosynthesis; dimethylallyl diphosphate from isopentenyl diphosphate: step 1/1. Functionally, catalyzes the 1,3-allylic rearrangement of the homoallylic substrate isopentenyl (IPP) to its highly electrophilic allylic isomer, dimethylallyl diphosphate (DMAPP). This chain is Isopentenyl-diphosphate Delta-isomerase, found in Escherichia coli O7:K1 (strain IAI39 / ExPEC).